Reading from the N-terminus, the 89-residue chain is Small ribosomal subunit protein uS14 (89 aa).

The protein belongs to the universal ribosomal protein uS14 family. As to quaternary structure, part of the 30S ribosomal subunit. Contacts proteins S3 and S10.

Functionally, binds 16S rRNA, required for the assembly of 30S particles and may also be responsible for determining the conformation of the 16S rRNA at the A site. This chain is Small ribosomal subunit protein uS14, found in Cytophaga hutchinsonii (strain ATCC 33406 / DSM 1761 / CIP 103989 / NBRC 15051 / NCIMB 9469 / D465).